Consider the following 182-residue polypeptide: Large ribosomal subunit protein uL5 (182 aa).

The protein belongs to the universal ribosomal protein uL5 family. Part of the 50S ribosomal subunit; part of the 5S rRNA/L5/L18/L25 subcomplex. Contacts the 5S rRNA and the P site tRNA. Forms a bridge to the 30S subunit in the 70S ribosome.

Its function is as follows. This is one of the proteins that bind and probably mediate the attachment of the 5S RNA into the large ribosomal subunit, where it forms part of the central protuberance. In the 70S ribosome it contacts protein S13 of the 30S subunit (bridge B1b), connecting the 2 subunits; this bridge is implicated in subunit movement. Contacts the P site tRNA; the 5S rRNA and some of its associated proteins might help stabilize positioning of ribosome-bound tRNAs. This chain is Large ribosomal subunit protein uL5, found in Nostoc sp. (strain PCC 7120 / SAG 25.82 / UTEX 2576).